The following is a 268-amino-acid chain: Large ribosomal subunit protein bL9m (268 aa).

The N-terminal 52 residues, 1-52, are a transit peptide targeting the mitochondrion; it reads MAAAAFAVPRGVQLRVLTERLLRGGVRELLRPRLSGSTPGSERDFSLSHSRG.

Belongs to the bacterial ribosomal protein bL9 family. Component of the mitochondrial ribosome large subunit (39S) which comprises a 16S rRNA and about 50 distinct proteins.

Its subcellular location is the mitochondrion. The polypeptide is Large ribosomal subunit protein bL9m (MRPL9) (Bos taurus (Bovine)).